The primary structure comprises 360 residues: Aminomethyltransferase (360 aa).

It belongs to the GcvT family. In terms of assembly, the glycine cleavage system is composed of four proteins: P, T, L and H.

It catalyses the reaction N(6)-[(R)-S(8)-aminomethyldihydrolipoyl]-L-lysyl-[protein] + (6S)-5,6,7,8-tetrahydrofolate = N(6)-[(R)-dihydrolipoyl]-L-lysyl-[protein] + (6R)-5,10-methylene-5,6,7,8-tetrahydrofolate + NH4(+). Functionally, the glycine cleavage system catalyzes the degradation of glycine. The polypeptide is Aminomethyltransferase (Flavobacterium psychrophilum (strain ATCC 49511 / DSM 21280 / CIP 103535 / JIP02/86)).